Consider the following 303-residue polypeptide: Catechol 1,2-dioxygenase (303 aa).

The Fe cation site is built by Tyr-156, Tyr-191, His-215, and His-217.

In terms of assembly, homodimer. Fe(3+) serves as cofactor.

The catalysed reaction is catechol + O2 = cis,cis-muconate + 2 H(+). Its pathway is aromatic compound metabolism; beta-ketoadipate pathway; 5-oxo-4,5-dihydro-2-furylacetate from catechol: step 1/3. Its activity is regulated as follows. Inhibited by Ag(+), Cu(+), Hg(2+) and Pb(2+). In terms of biological role, can cleave 4-methylcatechol at lower rates than catechol, but has no activity with 3-methylcatechol, 4-chlorocatechol, 4-carboxycatechol or hydroxyquinol. The sequence is that of Catechol 1,2-dioxygenase (HQD2) from Candida albicans (strain SC5314 / ATCC MYA-2876) (Yeast).